We begin with the raw amino-acid sequence, 282 residues long: 4-diphosphocytidyl-2-C-methyl-D-erythritol kinase (282 aa).

Residue lysine 13 is part of the active site. 96–106 serves as a coordination point for ATP; sequence PMGGGIGGGSS. Aspartate 138 is an active-site residue.

Belongs to the GHMP kinase family. IspE subfamily.

It carries out the reaction 4-CDP-2-C-methyl-D-erythritol + ATP = 4-CDP-2-C-methyl-D-erythritol 2-phosphate + ADP + H(+). It functions in the pathway isoprenoid biosynthesis; isopentenyl diphosphate biosynthesis via DXP pathway; isopentenyl diphosphate from 1-deoxy-D-xylulose 5-phosphate: step 3/6. Its function is as follows. Catalyzes the phosphorylation of the position 2 hydroxy group of 4-diphosphocytidyl-2C-methyl-D-erythritol. The polypeptide is 4-diphosphocytidyl-2-C-methyl-D-erythritol kinase (Pseudomonas syringae pv. syringae (strain B728a)).